The chain runs to 373 residues: Lipoyl amidotransferase LIPT1, mitochondrial (373 aa).

A mitochondrion-targeting transit peptide spans 1-25 (MLIPFSMKNCFQLLCNCQVPAAGFK). In terms of domain architecture, BPL/LPL catalytic spans 57 to 243 (LEGKPILFFW…EYAAYHQIDN (187 aa)). Tyr107, Arg151, Lys161, and Thr179 together coordinate (R)-lipoyl-5'-AMP.

It belongs to the LplA family. In terms of tissue distribution, highly expressed in skeletal muscle and heart, moderately in kidney and pancreas, and detected at lower levels in liver, brain, placenta and lung.

It is found in the mitochondrion. It carries out the reaction N(6)-[(R)-lipoyl]-L-lysyl-[glycine-cleavage complex H protein] + L-lysyl-[lipoyl-carrier protein] = L-lysyl-[glycine-cleavage complex H protein] + N(6)-[(R)-lipoyl]-L-lysyl-[lipoyl-carrier protein]. The catalysed reaction is (R)-lipoyl-5'-AMP + L-lysyl-[lipoyl-carrier protein] = N(6)-[(R)-lipoyl]-L-lysyl-[lipoyl-carrier protein] + AMP + 2 H(+). It participates in protein modification; protein lipoylation via exogenous pathway; protein N(6)-(lipoyl)lysine from lipoate: step 2/2. Its function is as follows. Lipoyl amidotransferase that catalyzes the transfer of lipoyl moieties from lipoyl-protein H of the glycine cleavage system (lipoyl-GCSH) to E2 subunits of the pyruvate dehydrogenase complex (PDCE2). Unable to catalyze the transfer of octanoyl from octanoyl-GCSH to PDCE2. In vitro, it is also able to catalyze the transfer of the lipoyl group from lipoyl-AMP to the specific lysine residue of lipoyl domains of lipoate-dependent enzymes but this reaction may not be physiologically relevant. In Homo sapiens (Human), this protein is Lipoyl amidotransferase LIPT1, mitochondrial.